We begin with the raw amino-acid sequence, 884 residues long: Alanine--tRNA ligase (884 aa).

Zn(2+) contacts are provided by His-572, His-576, Cys-673, and His-677.

It belongs to the class-II aminoacyl-tRNA synthetase family. Requires Zn(2+) as cofactor.

Its subcellular location is the cytoplasm. It catalyses the reaction tRNA(Ala) + L-alanine + ATP = L-alanyl-tRNA(Ala) + AMP + diphosphate. Its function is as follows. Catalyzes the attachment of alanine to tRNA(Ala) in a two-step reaction: alanine is first activated by ATP to form Ala-AMP and then transferred to the acceptor end of tRNA(Ala). Also edits incorrectly charged Ser-tRNA(Ala) and Gly-tRNA(Ala) via its editing domain. This Xylella fastidiosa (strain 9a5c) protein is Alanine--tRNA ligase.